The following is a 372-amino-acid chain: tRNA pseudouridine synthase D (372 aa).

Aspartate 85 serves as the catalytic Nucleophile. The 171-residue stretch at 160 to 330 (GFTNYFGYQR…MQGSRRFMWG (171 aa)) folds into the TRUD domain.

It belongs to the pseudouridine synthase TruD family.

The enzyme catalyses uridine(13) in tRNA = pseudouridine(13) in tRNA. Functionally, responsible for synthesis of pseudouridine from uracil-13 in transfer RNAs. The chain is tRNA pseudouridine synthase D from Campylobacter jejuni subsp. jejuni serotype O:23/36 (strain 81-176).